We begin with the raw amino-acid sequence, 801 residues long: Phosphatidylinositol 3-kinase pik3 (801 aa).

The C2 PI3K-type domain occupies V14–Q166. In terms of domain architecture, PIK helical spans D257–E439. The 271-residue stretch at I515–F785 folds into the PI3K/PI4K catalytic domain. The G-loop stretch occupies residues V521–Q527. The segment at G654 to N662 is catalytic loop. Residues H673–S694 are activation loop.

Belongs to the PI3/PI4-kinase family. As to quaternary structure, component of the autophagy-specific vps34 PI3-kinase complex I composed of vps15, atg6, pik3/vps34, atg14 and atg38. Also a component of the VPS34 PI3-kinase complex II composed of atg6, pik3, vps15 and vps38.

It carries out the reaction a 1,2-diacyl-sn-glycero-3-phospho-(1D-myo-inositol) + ATP = a 1,2-diacyl-sn-glycero-3-phospho-(1D-myo-inositol-3-phosphate) + ADP + H(+). Functionally, phosphatidylinositol 3-kinase that functions as a part of the autophagy-specific VPS34 PI3-kinase complex I that plays a role in autophagosome assembly. This complex is essential to recruit the atg8-phosphatidylinositol conjugate and the atg12-atg5 conjugate to the pre-autophagosomal structure. Also functions as part of the VPS34 PI3-kinase complex II. This chain is Phosphatidylinositol 3-kinase pik3 (pik3), found in Schizosaccharomyces pombe (strain 972 / ATCC 24843) (Fission yeast).